The sequence spans 291 residues: ATP phosphoribosyltransferase (291 aa).

This sequence belongs to the ATP phosphoribosyltransferase family. Long subfamily. It depends on Mg(2+) as a cofactor.

It localises to the cytoplasm. The catalysed reaction is 1-(5-phospho-beta-D-ribosyl)-ATP + diphosphate = 5-phospho-alpha-D-ribose 1-diphosphate + ATP. Its pathway is amino-acid biosynthesis; L-histidine biosynthesis; L-histidine from 5-phospho-alpha-D-ribose 1-diphosphate: step 1/9. With respect to regulation, feedback inhibited by histidine. Functionally, catalyzes the condensation of ATP and 5-phosphoribose 1-diphosphate to form N'-(5'-phosphoribosyl)-ATP (PR-ATP). Has a crucial role in the pathway because the rate of histidine biosynthesis seems to be controlled primarily by regulation of HisG enzymatic activity. In Geotalea uraniireducens (strain Rf4) (Geobacter uraniireducens), this protein is ATP phosphoribosyltransferase.